Reading from the N-terminus, the 211-residue chain is Mitotic spindle assembly checkpoint protein MAD2B (211 aa).

Residues 13 to 203 (QVVADILCEF…SDILKMQLYV (191 aa)) enclose the HORMA domain.

In terms of assembly, homooligomer. Interacts with rev1. Interacts with rev3l. Interacts with fzr1 (in complex with the anaphase promoting complex APC). May interact with cdc20.

The protein resides in the nucleus. It is found in the cytoplasm. It localises to the cytoskeleton. The protein localises to the spindle. In terms of biological role, adapter protein able to interact with different proteins and involved in different biological processes. Mediates the interaction between the error-prone DNA polymerase zeta catalytic subunit rev3l and the inserter polymerase rev1, thereby mediating the second polymerase switching in translesion DNA synthesis. Translesion DNA synthesis releases the replication blockade of replicative polymerases, stalled in presence of DNA lesions. May also play a role in signal transduction in response to DNA damage. May regulate the activation of the anaphase promoting complex APC thereby regulating progression through the cell cycle. Through transcriptional regulation may play a role in epithelial-mesenchymal transdifferentiation. Inhibits the fzr1-APC complex activity during mitosis. Plays a role in progression of mitosis. The sequence is that of Mitotic spindle assembly checkpoint protein MAD2B (mad2l2) from Xenopus laevis (African clawed frog).